The chain runs to 440 residues: Serine hydroxymethyltransferase (440 aa).

(6S)-5,6,7,8-tetrahydrofolate contacts are provided by residues Leu-119 and 123–125 (GHL). Lys-228 carries the N6-(pyridoxal phosphate)lysine modification. Residue 370–372 (SPF) coordinates (6S)-5,6,7,8-tetrahydrofolate.

The protein belongs to the SHMT family. In terms of assembly, homodimer. It depends on pyridoxal 5'-phosphate as a cofactor.

It localises to the cytoplasm. It catalyses the reaction (6R)-5,10-methylene-5,6,7,8-tetrahydrofolate + glycine + H2O = (6S)-5,6,7,8-tetrahydrofolate + L-serine. Its pathway is one-carbon metabolism; tetrahydrofolate interconversion. It functions in the pathway amino-acid biosynthesis; glycine biosynthesis; glycine from L-serine: step 1/1. Its function is as follows. Catalyzes the reversible interconversion of serine and glycine with tetrahydrofolate (THF) serving as the one-carbon carrier. This reaction serves as the major source of one-carbon groups required for the biosynthesis of purines, thymidylate, methionine, and other important biomolecules. Also exhibits THF-independent aldolase activity toward beta-hydroxyamino acids, producing glycine and aldehydes, via a retro-aldol mechanism. The chain is Serine hydroxymethyltransferase from Chlorobaculum parvum (strain DSM 263 / NCIMB 8327) (Chlorobium vibrioforme subsp. thiosulfatophilum).